The primary structure comprises 129 residues: Follitropin subunit beta (129 aa).

The N-terminal stretch at 1–20 (MKSLQFCFLFCCWKAICCNS) is a signal peptide. 6 cysteine pairs are disulfide-bonded: C21-C69, C35-C84, C38-C122, C46-C100, C50-C102, and C105-C112. N-linked (GlcNAc...) asparagine glycosylation is found at N25 and N42.

Belongs to the glycoprotein hormones subunit beta family. In terms of assembly, heterodimer. The active follitropin is a heterodimer composed of an alpha chain/CGA shared with other hormones and a unique beta chain/FSHB shown here.

It is found in the secreted. Its function is as follows. Together with the alpha chain CGA constitutes follitropin, the follicle-stimulating hormone, and provides its biological specificity to the hormone heterodimer. Binds FSHR, a G protein-coupled receptor, on target cells to activate downstream signaling pathways. Follitropin is involved in follicle development and spermatogenesis in reproductive organs. This chain is Follitropin subunit beta (FSHB), found in Sus scrofa (Pig).